A 358-amino-acid chain; its full sequence is Acid phosphatase (358 aa).

The signal sequence occupies residues 1-17 (MKFSTIALPLLASAALA). N-linked (GlcNAc...) asparagine glycosylation is found at asparagine 20, asparagine 27, and asparagine 32. The segment at 21–41 (SSHSGTNATSHNSTVPNENSK) is disordered. Residues aspartate 49, aspartate 50, and serine 81 each contribute to the Mg(2+) site. Residues asparagine 92 and asparagine 145 are each glycosylated (N-linked (GlcNAc...) asparagine). Asparagine 156 is a Mg(2+) binding site. Serine 189 is an active-site residue. N-linked (GlcNAc...) asparagine glycosylation is found at asparagine 199 and asparagine 278.

This sequence belongs to the SurE nucleotidase family. Mg(2+) is required as a cofactor.

It is found in the secreted. It catalyses the reaction a phosphate monoester + H2O = an alcohol + phosphate. In terms of biological role, probably serves to scavenge phosphorus for growing cells. The sequence is that of Acid phosphatase (PHO2) from Yarrowia lipolytica (strain CLIB 122 / E 150) (Yeast).